A 124-amino-acid polypeptide reads, in one-letter code: Fluoride-specific ion channel FluC (124 aa).

Helical transmembrane passes span Ile4 to Phe24, Phe35 to Gly55, Val70 to Ile90, and Trp95 to Leu115. Gly74 and Thr77 together coordinate Na(+).

The protein belongs to the fluoride channel Fluc/FEX (TC 1.A.43) family.

It is found in the cell inner membrane. It carries out the reaction fluoride(in) = fluoride(out). Its activity is regulated as follows. Na(+) is not transported, but it plays an essential structural role and its presence is essential for fluoride channel function. Its function is as follows. Fluoride-specific ion channel. Important for reducing fluoride concentration in the cell, thus reducing its toxicity. The polypeptide is Fluoride-specific ion channel FluC (Shewanella woodyi (strain ATCC 51908 / MS32)).